The chain runs to 846 residues: uncharacterized protein (846 aa).

6 disordered regions span residues 159–217, 254–276, 332–414, 459–501, 556–651, and 803–846; these read VPTF…INHI, CNLNGNNNNNNNNNNNNNNSNSN, NKLN…PLSI, GSSI…SNSL, QQQQ…NFND, and TTTT…NKNK. Residues 163–217 are compositionally biased toward low complexity; it reads HNQNQNNNNQNNNQNNNNNNNNNNNNNNNNNNNNNNNSQNNNNNQNNNNNHINHI. Positions 355-414 are enriched in low complexity; that stretch reads LQSPNSQSLANSSANISSNALNQSSSSQQQQPQSTSQQQQQQHKMNSSSGNISPPLPLSI. Polar residues predominate over residues 459 to 482; it reads GSSITPKNLSPLSSSAPNTPKQFA. Composition is skewed to low complexity over residues 483–501, 568–642, and 811–846; these read SLSSSSSPSSSTSSSSNSL, QQQQ…QPNN, and NNNNNNNNNNNNNNNNNNNNNNNNNNNNNNNNNKNK.

This is an uncharacterized protein from Dictyostelium discoideum (Social amoeba).